Reading from the N-terminus, the 132-residue chain is Small ribosomal subunit protein uS8c (132 aa).

The protein belongs to the universal ribosomal protein uS8 family. As to quaternary structure, part of the 30S ribosomal subunit.

The protein resides in the plastid. It localises to the cyanelle. Its function is as follows. One of the primary rRNA binding proteins, it binds directly to 16S rRNA central domain where it helps coordinate assembly of the platform of the 30S subunit. The sequence is that of Small ribosomal subunit protein uS8c (rps8) from Cyanophora paradoxa.